The following is a 459-amino-acid chain: Cysteine--tRNA ligase (459 aa).

Cys31 provides a ligand contact to Zn(2+). Positions 33 to 43 match the 'HIGH' region motif; the sequence is PTVYDNPHIGN. Residues Cys216, His241, and Glu245 each coordinate Zn(2+). The 'KMSKS' region signature appears at 274 to 278; that stretch reads KMSKS. Lys277 contacts ATP.

The protein belongs to the class-I aminoacyl-tRNA synthetase family. Monomer. Zn(2+) is required as a cofactor.

Its subcellular location is the cytoplasm. It carries out the reaction tRNA(Cys) + L-cysteine + ATP = L-cysteinyl-tRNA(Cys) + AMP + diphosphate. The polypeptide is Cysteine--tRNA ligase (Rickettsia canadensis (strain McKiel)).